A 243-amino-acid chain; its full sequence is Cell division protein FtsQ (243 aa).

Residues Met1–Lys19 lie on the Cytoplasmic side of the membrane. Residues Leu20–Leu40 traverse the membrane as a helical segment. The Periplasmic portion of the chain corresponds to His41 to Asn243. A POTRA domain is found at Leu46–Gln115.

The protein belongs to the FtsQ/DivIB family. FtsQ subfamily. In terms of assembly, part of a complex composed of FtsB, FtsL and FtsQ.

The protein localises to the cell inner membrane. Essential cell division protein. May link together the upstream cell division proteins, which are predominantly cytoplasmic, with the downstream cell division proteins, which are predominantly periplasmic. May control correct divisome assembly. The protein is Cell division protein FtsQ of Coxiella burnetii (strain RSA 493 / Nine Mile phase I).